Here is a 150-residue protein sequence, read N- to C-terminus: Large ribosomal subunit protein uL15 (150 aa).

The disordered stretch occupies residues 1 to 49 (MELHQLKSVSKSRNHKSKVVGRGHGSGLGKTSSRGQKGQKARKSGLTRL). The segment covering 10-21 (SKSRNHKSKVVG) has biased composition (basic residues).

Belongs to the universal ribosomal protein uL15 family. Part of the 50S ribosomal subunit.

Binds to the 23S rRNA. This is Large ribosomal subunit protein uL15 from Mycoplasma genitalium (strain ATCC 33530 / DSM 19775 / NCTC 10195 / G37) (Mycoplasmoides genitalium).